The chain runs to 48 residues: ATP synthase protein 8 (48 aa).

Met-1 is modified (N-formylmethionine). At 1 to 12 (MPQLIPFFFLNQ) the chain is on the mitochondrial intermembrane side. Residues 13–33 (LFYGYLALFALLVLVSWVILP) form a helical membrane-spanning segment. Residues 34 to 48 (YLLQLQIVRLLITKL) are Mitochondrial matrix-facing.

As to quaternary structure, F-type ATP synthases have 2 components, the catalytic core F(1) and the membrane-embedded component F(0), linked together by a central stalk and a peripheral stalk. The central stalk, also called rotor shaft, is often seen as part of F(1). The peripheral stalk is seen as part of F(0). F(0) contains the membrane channel next to the rotor. F-type ATP synthases form dimers but each monomer functions independently in ATP generation. The dimer consists of 18 different polypeptides: ATP1 (subunit alpha, part of F(1), 3 molecules per monomer), ATP2 (subunit beta, part of F(1), 3 molecules per monomer), ATP3 (subunit gamma, part of the central stalk), ATP4 (subunit b, part of the peripheral stalk), ATP5/OSCP (subunit 5/OSCP, part of the peripheral stalk), ATP6 (subunit a, part of the peripheral stalk), ATP7 (subunit d, part of the peripheral stalk), ATP8 (subunit 8, part of the peripheral stalk), OLI1 (subunit c, part of the rotor, 10 molecules per monomer), ATP14 (subunit h, part of the peripheral stalk), ATP15 (subunit epsilon, part of the central stalk), ATP16 (subunit delta, part of the central stalk), ATP17 (subunit f, part of the peripheral stalk), ATP18 (subunit i/j, part of the peripheral stalk). Dimer-specific subunits are ATP19 (subunit k, at interface between monomers), ATP20 (subunit g, at interface between monomers), TIM11 (subunit e, at interface between monomers). Also contains subunit L.

The protein localises to the mitochondrion inner membrane. In terms of biological role, mitochondrial membrane ATP synthase (F(1)F(0) ATP synthase or Complex V) produces ATP from ADP in the presence of a proton gradient across the membrane which is generated by electron transport complexes of the respiratory chain. F-type ATP synthases consist of two structural domains, F(1) - containing the extramembraneous catalytic core, and F(0) - containing the membrane proton channel, linked together by a central stalk and a peripheral stalk. During catalysis, ATP synthesis in the catalytic domain of F(1) is coupled via a rotary mechanism of the central stalk subunits to proton translocation. Part of the complex F(0) domain. Minor subunit located with subunit a/ATP6 in the membrane. This is ATP synthase protein 8 from Pichia angusta (Yeast).